Consider the following 217-residue polypeptide: Flagellar L-ring protein 2 (217 aa).

A signal peptide spans 1–15 (MRILLALTWLAWLGA). A lipid anchor (N-palmitoyl cysteine) is attached at Cys-16. Residue Cys-16 is the site of S-diacylglycerol cysteine attachment.

Belongs to the FlgH family. As to quaternary structure, the basal body constitutes a major portion of the flagellar organelle and consists of four rings (L,P,S, and M) mounted on a central rod.

It is found in the cell outer membrane. Its subcellular location is the bacterial flagellum basal body. Its function is as follows. Assembles around the rod to form the L-ring and probably protects the motor/basal body from shearing forces during rotation. This Burkholderia thailandensis (strain ATCC 700388 / DSM 13276 / CCUG 48851 / CIP 106301 / E264) protein is Flagellar L-ring protein 2.